Here is a 448-residue protein sequence, read N- to C-terminus: B-cell lymphoma 3 protein homolog (448 aa).

A disordered region spans residues 1–54; that stretch reads MPRCPAGAMDEGPVDLRTRPKGTPGAALPLRKRPLRPASPEPATTRSPAGPLDA. Serine 39 is subject to Phosphoserine. ANK repeat units follow at residues 129 to 161, 166 to 195, 199 to 228, 236 to 265, 270 to 299, 303 to 332, and 333 to 362; these read DGDT…REVD, LRQT…SPMA, HGQT…SGSV, EGLT…DIDA, SGRS…NVNA, SGSS…DSGL, and KNCH…RAAS. Residues 356–448 are disordered; the sequence is KASRAASGSQ…VPPSPAPGSS (93 aa). Over residues 361–376 the composition is skewed to polar residues; it reads ASGSQPEPSPDQSATN. Residue serine 369 is modified to Phosphoserine. Low complexity predominate over residues 377-398; the sequence is SPESSSRLSSNGLQSSPSSSPS. Serine 396 and serine 400 each carry phosphoserine; by GSK3. Residues 411–423 show a composition bias toward polar residues; sequence TPQNFFLPTTSTP. Low complexity predominate over residues 425–436; sequence FLPFPGVLRGPG. The segment covering 437 to 448 has biased composition (pro residues); sequence RPVPPSPAPGSS.

As to quaternary structure, component of a complex consisting of the NF-kappa-B p52-p52 homodimer and BCL3. Component of a complex consisting of the NF-kappa-B p50-p50 homodimer and BCL3. Interacts with N4BP2, COPS5 and PIR. Interacts with CYLD. Post-translationally, polyubiquitinated. Ubiquitination via 'Lys-63'-linked ubiquitin chains is required for nuclear accumulation. Deubiquitinated by CYLD, which acts on 'Lys-63'-linked ubiquitin chains. Deubiquitination by CYLD prevents nuclear accumulation. Activated by phosphorylation.

The protein resides in the nucleus. It is found in the cytoplasm. Its subcellular location is the perinuclear region. In terms of biological role, contributes to the regulation of transcriptional activation of NF-kappa-B target genes. In the cytoplasm, inhibits the nuclear translocation of the NF-kappa-B p50 subunit. In the nucleus, acts as a transcriptional activator that promotes transcription of NF-kappa-B target genes. Contributes to the regulation of cell proliferation. This Mus musculus (Mouse) protein is B-cell lymphoma 3 protein homolog (Bcl3).